The following is a 1394-amino-acid chain: DNA-directed RNA polymerase subunit beta' (1394 aa).

Cys71, Cys73, Cys86, and Cys89 together coordinate Zn(2+). Mg(2+)-binding residues include Asp462, Asp464, and Asp466. Residues Cys810, Cys884, Cys891, and Cys894 each contribute to the Zn(2+) site.

The protein belongs to the RNA polymerase beta' chain family. In terms of assembly, the RNAP catalytic core consists of 2 alpha, 1 beta, 1 beta' and 1 omega subunit. When a sigma factor is associated with the core the holoenzyme is formed, which can initiate transcription. The cofactor is Mg(2+). It depends on Zn(2+) as a cofactor.

It carries out the reaction RNA(n) + a ribonucleoside 5'-triphosphate = RNA(n+1) + diphosphate. In terms of biological role, DNA-dependent RNA polymerase catalyzes the transcription of DNA into RNA using the four ribonucleoside triphosphates as substrates. The protein is DNA-directed RNA polymerase subunit beta' of Caulobacter sp. (strain K31).